A 205-amino-acid chain; its full sequence is Transcriptional regulator GfcR (205 aa).

This sequence belongs to the purine/pyrimidine phosphoribosyltransferase family. GfcR subfamily.

The chain is Transcriptional regulator GfcR from Methanococcus maripaludis (strain C5 / ATCC BAA-1333).